A 349-amino-acid polypeptide reads, in one-letter code: Phenylalanine--tRNA ligase alpha subunit (349 aa).

Glu258 provides a ligand contact to Mg(2+).

Belongs to the class-II aminoacyl-tRNA synthetase family. Phe-tRNA synthetase alpha subunit type 1 subfamily. As to quaternary structure, tetramer of two alpha and two beta subunits. Requires Mg(2+) as cofactor.

It is found in the cytoplasm. It carries out the reaction tRNA(Phe) + L-phenylalanine + ATP = L-phenylalanyl-tRNA(Phe) + AMP + diphosphate + H(+). The chain is Phenylalanine--tRNA ligase alpha subunit from Rickettsia bellii (strain RML369-C).